A 388-amino-acid chain; its full sequence is MNLHEYQAKQLFARYGLPAPTGYACNTLREAEESASKIGAGPWVVKCQVHAGGRGKSGGVKVVKLKEEIRAFAEQWLGKRLVTYQTDALGQPVNQILVEVATDIAKELYLGVVVDRGTRRVVFMASTEGGVEIEKVAEETPHLIHKVALDPLTGPQPYQGRELAFKLGLSGKQVSQFSKIFMGLATLFLERDLALVEINPLVITGAGDLICLDGKLSADGNALFRQPELREMRDHSQEDEREAHATQLELNYVALDGNIGCMVNGAGLAMGTMDIVKLHGGEPANFLDVGGGATKERVTEAFKIILSDEKVKAVLVNIFGGIVRCDLIADGIIGAVSEVGVSVPVVVRLEGNNAELGAKRLADSGLNIIAATSLTDAAQQVVAAVEGK.

Positions 9-244 constitute an ATP-grasp domain; it reads KQLFARYGLP…HSQEDEREAH (236 aa). ATP contacts are provided by residues Lys-46, 53–55, Glu-99, Thr-102, and Glu-107; that span reads GRG. Mg(2+) contacts are provided by Asn-199 and Asp-213. Residues Asn-264 and 321-323 each bind substrate; that span reads GIV.

This sequence belongs to the succinate/malate CoA ligase beta subunit family. Heterotetramer of two alpha and two beta subunits. Mg(2+) serves as cofactor.

It catalyses the reaction succinate + ATP + CoA = succinyl-CoA + ADP + phosphate. The enzyme catalyses GTP + succinate + CoA = succinyl-CoA + GDP + phosphate. Its pathway is carbohydrate metabolism; tricarboxylic acid cycle; succinate from succinyl-CoA (ligase route): step 1/1. In terms of biological role, succinyl-CoA synthetase functions in the citric acid cycle (TCA), coupling the hydrolysis of succinyl-CoA to the synthesis of either ATP or GTP and thus represents the only step of substrate-level phosphorylation in the TCA. The beta subunit provides nucleotide specificity of the enzyme and binds the substrate succinate, while the binding sites for coenzyme A and phosphate are found in the alpha subunit. This Sodalis glossinidius (strain morsitans) protein is Succinate--CoA ligase [ADP-forming] subunit beta.